The following is a 565-amino-acid chain: NAD-dependent malic enzyme (565 aa).

Catalysis depends on tyrosine 104, which acts as the Proton donor. Arginine 157 serves as a coordination point for NAD(+). The Proton acceptor role is filled by lysine 175. Residues glutamate 246, aspartate 247, and aspartate 270 each coordinate a divalent metal cation. NAD(+) contacts are provided by aspartate 270 and asparagine 418.

It belongs to the malic enzymes family. As to quaternary structure, homotetramer. Requires Mg(2+) as cofactor. It depends on Mn(2+) as a cofactor.

The catalysed reaction is (S)-malate + NAD(+) = pyruvate + CO2 + NADH. It carries out the reaction oxaloacetate + H(+) = pyruvate + CO2. In Salmonella newport (strain SL254), this protein is NAD-dependent malic enzyme.